The chain runs to 387 residues: MAAAVTWIPLLAGLLAGLRDTKAQQTTLHLLVGRVFVHPLEHATFLRLPEHVAVPPTVRLTYHAHLQGHPDLPRWLHYTQRSPYNPGFLYGSPTPEDRGYQVIEVTAYNRDSFDTTRQRLLLLIGDPEGPRLPYQAEFLVRSHDVEEVLPTTPANRFLTALGGLWEPGELQLLNITSALDRGGRVPLPIEGRKEGVYIKVGSATPFSTCLKMVASPDSYARCAQGQPPLLSCYDTLAPHFRVDWCNVSLVDKSVPEPLDEVPTPGDGILEHDPFFCPPTEATDRDFLTDALVTLLVPLLVALLLTLLLAYIMCFRREGRLKRDMATSDIQMFHHCSIHGNTEELRQMAASREVPRPLSTLPMFNVRTGERLPPRVDSAQMPLILDQH.

An N-terminal signal peptide occupies residues 1–23 (MAAAVTWIPLLAGLLAGLRDTKA). At 24–293 (QQTTLHLLVG…RDFLTDALVT (270 aa)) the chain is on the extracellular side. N-linked (GlcNAc...) asparagine glycosylation is found at Asn-174 and Asn-246. A helical membrane pass occupies residues 294–314 (LLVPLLVALLLTLLLAYIMCF). Residues 315-387 (RREGRLKRDM…AQMPLILDQH (73 aa)) lie on the Cytoplasmic side of the membrane. Position 377 is a phosphoserine (Ser-377).

Belongs to the sarcoglycan alpha/epsilon family. Cross-link to form 2 major subcomplexes: one consisting of SGCB, SGCD and SGCG and the other consisting of SGCB and SGCD. The association between SGCB and SGCG is particularly strong while SGCA is loosely associated with the other sarcoglycans. Interacts with the syntrophin SNTA1. As to expression, striated muscle, both skeletal and cardiac.

It localises to the cell membrane. The protein localises to the sarcolemma. The protein resides in the cytoplasm. Its subcellular location is the cytoskeleton. In terms of biological role, component of the sarcoglycan complex, a subcomplex of the dystrophin-glycoprotein complex which forms a link between the F-actin cytoskeleton and the extracellular matrix. The polypeptide is Alpha-sarcoglycan (Sgca) (Mus musculus (Mouse)).